We begin with the raw amino-acid sequence, 904 residues long: Exo-beta-D-glucosaminidase (904 aa).

The N-terminal stretch at M1–A32 is a signal peptide. Positions A28–G49 are disordered. The Proton donor role is filled by D476. E545 serves as the catalytic Nucleophile. A compositionally biased stretch (low complexity) spans S813–V828. The segment at S813–S833 is disordered.

It belongs to the glycosyl hydrolase 2 family. Monomer.

It is found in the secreted. It carries out the reaction Hydrolysis of chitosan or chitosan oligosaccharides to remove successive D-glucosamine residues from the non-reducing termini.. Functionally, hydrolyzes chitosan and chitooligosaccharides with retention of anomeric configuration. Has no beta-mannosidase activity. In Streptomyces avermitilis (strain ATCC 31267 / DSM 46492 / JCM 5070 / NBRC 14893 / NCIMB 12804 / NRRL 8165 / MA-4680), this protein is Exo-beta-D-glucosaminidase.